Here is a 204-residue protein sequence, read N- to C-terminus: Proteasome subunit beta type-2-A (204 aa).

Met1 carries the post-translational modification N-acetylmethionine.

The protein belongs to the peptidase T1B family. As to quaternary structure, component of the 20S core complex of the 26S proteasome. The 26S proteasome is composed of a core protease (CP), known as the 20S proteasome, capped at one or both ends by the 19S regulatory particle (RP/PA700). The 20S proteasome core is composed of 28 subunits that are arranged in four stacked rings, resulting in a barrel-shaped structure. The two end rings are each formed by seven alpha subunits, and the two central rings are each formed by seven beta subunits. The catalytic chamber with the active sites is on the inside of the barrel.

The protein resides in the cytoplasm. The protein localises to the nucleus. In terms of biological role, non-catalytic component of the proteasome, a multicatalytic proteinase complex which is characterized by its ability to cleave peptides with Arg, Phe, Tyr, Leu, and Glu adjacent to the leaving group at neutral or slightly basic pH. The proteasome has an ATP-dependent proteolytic activity. This is Proteasome subunit beta type-2-A (PBD1) from Arabidopsis thaliana (Mouse-ear cress).